The sequence spans 356 residues: S-adenosylmethionine:tRNA ribosyltransferase-isomerase (356 aa).

Belongs to the QueA family. As to quaternary structure, monomer.

It localises to the cytoplasm. The catalysed reaction is 7-aminomethyl-7-carbaguanosine(34) in tRNA + S-adenosyl-L-methionine = epoxyqueuosine(34) in tRNA + adenine + L-methionine + 2 H(+). Its pathway is tRNA modification; tRNA-queuosine biosynthesis. In terms of biological role, transfers and isomerizes the ribose moiety from AdoMet to the 7-aminomethyl group of 7-deazaguanine (preQ1-tRNA) to give epoxyqueuosine (oQ-tRNA). The chain is S-adenosylmethionine:tRNA ribosyltransferase-isomerase from Citrobacter koseri (strain ATCC BAA-895 / CDC 4225-83 / SGSC4696).